Reading from the N-terminus, the 145-residue chain is D-aminoacyl-tRNA deacylase (145 aa).

The Gly-cisPro motif, important for rejection of L-amino acids signature appears at 137-138 (GP).

Belongs to the DTD family. Homodimer.

It localises to the cytoplasm. The enzyme catalyses glycyl-tRNA(Ala) + H2O = tRNA(Ala) + glycine + H(+). It carries out the reaction a D-aminoacyl-tRNA + H2O = a tRNA + a D-alpha-amino acid + H(+). An aminoacyl-tRNA editing enzyme that deacylates mischarged D-aminoacyl-tRNAs. Also deacylates mischarged glycyl-tRNA(Ala), protecting cells against glycine mischarging by AlaRS. Acts via tRNA-based rather than protein-based catalysis; rejects L-amino acids rather than detecting D-amino acids in the active site. By recycling D-aminoacyl-tRNA to D-amino acids and free tRNA molecules, this enzyme counteracts the toxicity associated with the formation of D-aminoacyl-tRNA entities in vivo and helps enforce protein L-homochirality. This Salmonella typhi protein is D-aminoacyl-tRNA deacylase.